The sequence spans 376 residues: Chaperone protein DnaJ (376 aa).

The J domain occupies 5–70 (DYYEVLGLSK…QKKANYDQFG (66 aa)). A CR-type zinc finger spans residues 133–215 (GVEKEISITR…CHGKGTVRKN (83 aa)). The Zn(2+) site is built by cysteine 146, cysteine 149, cysteine 163, cysteine 166, cysteine 189, cysteine 192, cysteine 203, and cysteine 206. CXXCXGXG motif repeat units follow at residues 146–153 (CDTCAGSG), 163–170 (CDKCGGTG), 189–196 (CDKCGGSG), and 203–210 (CTTCHGKG).

Belongs to the DnaJ family. Homodimer. Requires Zn(2+) as cofactor.

It localises to the cytoplasm. Participates actively in the response to hyperosmotic and heat shock by preventing the aggregation of stress-denatured proteins and by disaggregating proteins, also in an autonomous, DnaK-independent fashion. Unfolded proteins bind initially to DnaJ; upon interaction with the DnaJ-bound protein, DnaK hydrolyzes its bound ATP, resulting in the formation of a stable complex. GrpE releases ADP from DnaK; ATP binding to DnaK triggers the release of the substrate protein, thus completing the reaction cycle. Several rounds of ATP-dependent interactions between DnaJ, DnaK and GrpE are required for fully efficient folding. Also involved, together with DnaK and GrpE, in the DNA replication of plasmids through activation of initiation proteins. The sequence is that of Chaperone protein DnaJ from Clostridium novyi (strain NT).